Reading from the N-terminus, the 891-residue chain is Alanine--tRNA ligase (891 aa).

The Zn(2+) site is built by histidine 564, histidine 568, cysteine 681, and histidine 685.

The protein belongs to the class-II aminoacyl-tRNA synthetase family. Zn(2+) is required as a cofactor.

Its subcellular location is the cytoplasm. The catalysed reaction is tRNA(Ala) + L-alanine + ATP = L-alanyl-tRNA(Ala) + AMP + diphosphate. Its function is as follows. Catalyzes the attachment of alanine to tRNA(Ala) in a two-step reaction: alanine is first activated by ATP to form Ala-AMP and then transferred to the acceptor end of tRNA(Ala). Also edits incorrectly charged Ser-tRNA(Ala) and Gly-tRNA(Ala) via its editing domain. In Methylorubrum extorquens (strain PA1) (Methylobacterium extorquens), this protein is Alanine--tRNA ligase.